The following is a 498-amino-acid chain: Diacylglycerol O-acyltransferase 1A (498 aa).

Positions 1–67 (MAISDEPETV…ANSQPQQKQD (67 aa)) are disordered. The next 7 membrane-spanning stretches (helical) occupy residues 102–122 (HAGL…RLII), 146–166 (WPLF…FIVE), 178–198 (VVVV…VLVI), 203–223 (SAFL…LKLV), 253–273 (YPYN…TLCY), 295–315 (LIIF…PIVQ), and 342–362 (VWLC…AELL). Positions 369–375 (FYQDWWN) match the FYXDWWN motif motif. 3 helical membrane-spanning segments follow: residues 410 to 430 (AVAL…CIAV), 432 to 452 (CHIF…LVFI), and 465 to 485 (VGNM…CVLL). His-424 is an active-site residue.

The protein belongs to the membrane-bound acyltransferase family. Sterol o-acyltransferase subfamily. As to expression, highly expressed in flowers and pods. Expressed at low levels in roots, stems and leaves.

It is found in the endoplasmic reticulum membrane. It carries out the reaction an acyl-CoA + a 1,2-diacyl-sn-glycerol = a triacyl-sn-glycerol + CoA. Its pathway is glycerolipid metabolism; triacylglycerol biosynthesis. Its function is as follows. Major contributor to triacylglycerol (TAG) synthesis and oil accumulation in developing seeds. Catalyzes the acylation of the sn-3 hydroxy group of sn-1,2-diacylglycerol using acyl-CoA. Has a marked preference for oleoyl-CoA (18:1) and sn-1,2-dioleoylglycerol over vernoloyl-CoA and sn-1,2-divernoloylglycerol. Can use oleoyl-CoA, linoleoyl-CoA and linolenoyl-CoA as substrates. This Glycine max (Soybean) protein is Diacylglycerol O-acyltransferase 1A.